Consider the following 166-residue polypeptide: Eukaryotic translation initiation factor 5A (166 aa).

Lys52 bears the Hypusine mark. Residues Asp99–Pro125 form a disordered region.

It belongs to the eIF-5A family. Post-translationally, lys-52 undergoes hypusination, a unique post-translational modification that consists in the addition of a butylamino group from spermidine to lysine side chain, leading to the formation of the unusual amino acid hypusine. eIF-5As are the only known proteins to undergo this modification, which is essential for their function. Hypusination is mediated by the consecutive action of deoxyhypusine synthase DHSc and deoxyhypusine hydroxylase DOHH.

It is found in the cytoplasm. Translation factor that promotes translation elongation and termination, particularly upon ribosome stalling at specific amino acid sequence contexts. Binds between the exit (E) and peptidyl (P) site of the ribosome and promotes rescue of stalled ribosome: specifically required for efficient translation of polyproline-containing peptides as well as other motifs that stall the ribosome. Acts as a ribosome quality control (RQC) cofactor by joining the RQC complex to facilitate peptidyl transfer during CAT tailing step. Required for cell growth during both bloodstream (BF) and insect procyclic (PF) life cycle stages and for survival of the bloodstream form. The protein is Eukaryotic translation initiation factor 5A of Trypanosoma brucei brucei (strain 927/4 GUTat10.1).